The chain runs to 274 residues: S-adenosylmethionine-dependent nucleotide dehydratase (274 aa).

The region spanning 1–215 is the Radical SAM core domain; that stretch reads MAYKVNLHIT…VERHAEVSHD (215 aa). Positions 13, 17, and 20 each coordinate [4Fe-4S] cluster.

This sequence belongs to the radical SAM superfamily. Prokaryotic viperin family. [4Fe-4S] cluster is required as a cofactor.

The catalysed reaction is CTP + AH2 + S-adenosyl-L-methionine = 3'-deoxy-3',4'-didehydro-CTP + 5'-deoxyadenosine + L-methionine + A + H2O + H(+). Expression of pVip6 in E.coli (strain MG1655) confers resistance to phages lambda, P1, SECphi6, SECphi8 and T7. Catalyzes the conversion of cytidine triphosphate (CTP) to 3'-deoxy-3',4'-didehydro-CTP (ddhCTP), probably via a SAM-dependent radical mechanism. The modified nucleotide represses transcription from T7 RNA polymerase-directed genes (possibly by acting as chain terminators), strongly suggesting these nucleotides block viral polymerase transcription. The sequence is that of S-adenosylmethionine-dependent nucleotide dehydratase from Selenomonas ruminantium.